The sequence spans 350 residues: Guanine nucleotide-binding protein G(t) subunit alpha-1 (350 aa).

The interval 1-21 (MGAGASAEEKHSRELEKKLKE) is disordered. Residue Gly-2 is the site of N-myristoyl glycine attachment. The span at 7 to 21 (AEEKHSRELEKKLKE) shows a compositional bias: basic and acidic residues. One can recognise a G-alpha domain in the interval 28-350 (RTVKLLLLGA…KENLKDCGLF (323 aa)). The G1 motif stretch occupies residues 31 to 44 (KLLLLGAGESGKST). 36–43 (GAGESGKS) contacts GTP. A Mg(2+)-binding site is contributed by Ser-43. Tyr-142 is subject to Phosphotyrosine. Residues Asp-146, 171–177 (LRSRVKT), Gly-199, 265–268 (NKKD), and Ala-322 contribute to the GTP site. The segment at 169–177 (DVLRSRVKT) is G2 motif. Thr-177 lines the Mg(2+) pocket. The G3 motif stretch occupies residues 192–201 (FRMFDVGGQR). Positions 261–268 (VLFLNKKD) are G4 motif. The interval 320 to 325 (TCATDT) is G5 motif. The interval 340–350 (IKENLKDCGLF) is interaction with RHO.

In terms of assembly, heterotrimeric G proteins are composed of 3 subunits alpha, beta and gamma. The alpha chain contains the guanine nucleotide binding site. Interacts with RHO. Interacts with RGS9 and PDE6G. Interacts (when myristoylated) with UNC119; interaction is required for localization in sensory neurons. In terms of tissue distribution, rod.

Its subcellular location is the cell projection. It localises to the cilium. It is found in the photoreceptor outer segment. The protein resides in the membrane. The protein localises to the photoreceptor inner segment. Functionally, functions as a signal transducer for the rod photoreceptor RHO. Required for normal RHO-mediated light perception by the retina. Guanine nucleotide-binding proteins (G proteins) function as transducers downstream of G protein-coupled receptors (GPCRs), such as the photoreceptor RHO. The alpha chain contains the guanine nucleotide binding site and alternates between an active, GTP-bound state and an inactive, GDP-bound state. Activated RHO promotes GDP release and GTP binding. Signaling is mediated via downstream effector proteins, such as cGMP-phosphodiesterase. The protein is Guanine nucleotide-binding protein G(t) subunit alpha-1 (GNAT1) of Bos taurus (Bovine).